Consider the following 111-residue polypeptide: Nucleoid-associated protein lhv_0401 (111 aa).

It belongs to the YbaB/EbfC family. Homodimer.

The protein resides in the cytoplasm. The protein localises to the nucleoid. In terms of biological role, binds to DNA and alters its conformation. May be involved in regulation of gene expression, nucleoid organization and DNA protection. This is Nucleoid-associated protein lhv_0401 from Lactobacillus helveticus (strain DPC 4571).